The following is an 87-amino-acid chain: Large ribosomal subunit protein bL27 (87 aa).

A disordered region spans residues 1–22 (MAHKKGQGSVKNGRDSRSKRLG).

It belongs to the bacterial ribosomal protein bL27 family.

The polypeptide is Large ribosomal subunit protein bL27 (Akkermansia muciniphila (strain ATCC BAA-835 / DSM 22959 / JCM 33894 / BCRC 81048 / CCUG 64013 / CIP 107961 / Muc)).